A 120-amino-acid polypeptide reads, in one-letter code: Large ribosomal subunit protein bL12 (120 aa).

The protein belongs to the bacterial ribosomal protein bL12 family. In terms of assembly, homodimer. Part of the ribosomal stalk of the 50S ribosomal subunit. Forms a multimeric L10(L12)X complex, where L10 forms an elongated spine to which 2 to 4 L12 dimers bind in a sequential fashion. Binds GTP-bound translation factors.

Its function is as follows. Forms part of the ribosomal stalk which helps the ribosome interact with GTP-bound translation factors. Is thus essential for accurate translation. The chain is Large ribosomal subunit protein bL12 from Clostridium botulinum (strain Alaska E43 / Type E3).